A 119-amino-acid chain; its full sequence is Protein TusC (119 aa).

Belongs to the DsrF/TusC family. Heterohexamer, formed by a dimer of trimers. The hexameric TusBCD complex contains 2 copies each of TusB, TusC and TusD. The TusBCD complex interacts with TusE.

The protein localises to the cytoplasm. Functionally, part of a sulfur-relay system required for 2-thiolation of 5-methylaminomethyl-2-thiouridine (mnm(5)s(2)U) at tRNA wobble positions. This chain is Protein TusC, found in Shigella sonnei (strain Ss046).